The sequence spans 347 residues: Tetraacyldisaccharide 4'-kinase (347 aa).

Residue 54–61 (TVGGAGKT) coordinates ATP.

Belongs to the LpxK family.

It carries out the reaction a lipid A disaccharide + ATP = a lipid IVA + ADP + H(+). It participates in glycolipid biosynthesis; lipid IV(A) biosynthesis; lipid IV(A) from (3R)-3-hydroxytetradecanoyl-[acyl-carrier-protein] and UDP-N-acetyl-alpha-D-glucosamine: step 6/6. Transfers the gamma-phosphate of ATP to the 4'-position of a tetraacyldisaccharide 1-phosphate intermediate (termed DS-1-P) to form tetraacyldisaccharide 1,4'-bis-phosphate (lipid IVA). This chain is Tetraacyldisaccharide 4'-kinase, found in Rhizobium etli (strain CIAT 652).